Reading from the N-terminus, the 156-residue chain is E3 ubiquitin-protein ligase RNF181 (156 aa).

Residues 79 to 120 (CPVCLLEFEEQESVREMPCKHLFHTGCILPWLNKTNSCPLCR) form an RING-type; atypical zinc finger. The disordered stretch occupies residues 135 to 156 (KDKERRRQREHRLEDLHGAMYT).

This sequence belongs to the RNF181 family.

It carries out the reaction S-ubiquitinyl-[E2 ubiquitin-conjugating enzyme]-L-cysteine + [acceptor protein]-L-lysine = [E2 ubiquitin-conjugating enzyme]-L-cysteine + N(6)-ubiquitinyl-[acceptor protein]-L-lysine.. Its pathway is protein modification; protein ubiquitination. Its function is as follows. E3 ubiquitin-protein ligase which accepts ubiquitin from an E2 ubiquitin-conjugating enzyme in the form of a thioester and then directly transfers the ubiquitin to targeted substrates. Catalyzes monoubiquitination of 26S proteasome subunit PSMC2/RPT1. The sequence is that of E3 ubiquitin-protein ligase RNF181 (rnf181) from Danio rerio (Zebrafish).